The following is a 214-amino-acid chain: Large ribosomal subunit protein uL16-like (214 aa).

The protein belongs to the universal ribosomal protein uL16 family. As to quaternary structure, component of the 60S large ribosomal subunit (LSU).

Its subcellular location is the cytoplasm. Its function is as follows. Testis-specific component of the ribosome, which is required for the transition from prophase to metaphase in male meiosis I. Compensates for the inactivated X-linked RPL10 paralog during spermatogenesis. The ribosome is a large ribonucleoprotein complex responsible for the synthesis of proteins in the cell. The small ribosomal subunit (SSU) binds messenger RNAs (mRNAs) and translates the encoded message by selecting cognate aminoacyl-transfer RNA (tRNA) molecules. The large subunit (LSU) contains the ribosomal catalytic site termed the peptidyl transferase center (PTC), which catalyzes the formation of peptide bonds, thereby polymerizing the amino acids delivered by tRNAs into a polypeptide chain. The nascent polypeptides leave the ribosome through a tunnel in the LSU and interact with protein factors that function in enzymatic processing, targeting, and the membrane insertion of nascent chains at the exit of the ribosomal tunnel. This Bos taurus (Bovine) protein is Large ribosomal subunit protein uL16-like (RPL10L).